A 408-amino-acid chain; its full sequence is RNA-splicing ligase RtcB (408 aa).

Positions 75, 78, 168, 185, and 281 each coordinate Mn(2+). N167–E171 contributes to the GMP binding site. Residues H281 to N282, P313 to M316, S320, H337 to G340, and K407 each bind GMP. The GMP-histidine intermediate role is filled by H337.

Belongs to the RtcB family. Monomer. The cofactor is Mn(2+).

It catalyses the reaction a 3'-end 3'-phospho-ribonucleotide-RNA + a 5'-end dephospho-ribonucleoside-RNA + GTP = a ribonucleotidyl-ribonucleotide-RNA + GMP + diphosphate. It carries out the reaction a 3'-end 2',3'-cyclophospho-ribonucleotide-RNA + a 5'-end dephospho-ribonucleoside-RNA + GTP + H2O = a ribonucleotidyl-ribonucleotide-RNA + GMP + diphosphate + H(+). Functionally, GTP-dependent RNA ligase that is involved in RNA repair. Joins RNA with 2',3'-cyclic-phosphate or 3'-phosphate ends to RNA with 5'-hydroxy ends. Also acts as a DNA ligase in case of DNA damage by splicing 'dirty' DNA breaks, characterized by 3'-phosphate (or cyclic-phosphate) and 5'-hydroxy ends that cannot be sealed by classical DNA ligases. Repairs tRNA cleaved by colicins D or E5, does not repair damaged 16S rRNA. In terms of biological role, able to catalyze tRNA splicing in vivo in yeast, but bacteria are not known to splice tRNA. In Escherichia coli (strain K12), this protein is RNA-splicing ligase RtcB.